The chain runs to 78 residues: FXYD domain-containing ion transport regulator 7 (78 aa).

At 1–22 (MATQVPTKVPQDPDPFYYDYDT) the chain is on the extracellular side. O-linked (GlcNAc) threonine glycosylation is found at threonine 3 and threonine 7. Residues 23–43 (VQTVGMTLATILFLLGILIIL) form a helical membrane-spanning segment. Topologically, residues 44–78 (SKKVKCRKADSRSESPTCKSCKSELPSSAPGGGGV) are cytoplasmic. Residues 52-78 (ADSRSESPTCKSCKSELPSSAPGGGGV) are disordered. Residue serine 71 is modified to Phosphoserine.

This sequence belongs to the FXYD family. In terms of assembly, regulatory subunit of the sodium/potassium-transporting ATPase which is composed of a catalytic alpha subunit, a non-catalytic beta subunit and an additional regulatory subunit. The regulatory subunit, a member of the FXYD protein family, modulates the enzymatic activity in a tissue- and isoform-specific way by changing affinities of the Na+/K+-ATPase toward Na(+), K(+) or ATP. Post-translationally, O-glycosylated; required for stabilization and translocation to the plasma membrane.

It is found in the cell membrane. In terms of biological role, associates with and regulates the activity of the sodium/potassium-transporting ATPase (NKA) which catalyzes the hydrolysis of ATP coupled with the exchange of Na(+) and K(+) ions across the plasma membrane. Reduces the apparent affinity for external K(+), an effect that depends on the presence of external Na(+) and voltage. Increases the apparent affinity for intracellular Na(+). This chain is FXYD domain-containing ion transport regulator 7 (FXYD7), found in Bos taurus (Bovine).